Here is a 102-residue protein sequence, read N- to C-terminus: Beta-defensin 116 (102 aa).

Residues 1 to 23 (MSVMKPCLMTIAILMILAQKTPG) form the signal peptide. 3 disulfides stabilise this stretch: C40–C67, C47–C61, and C51–C68. A disordered region spans residues 83 to 102 (EDYDSNSNLSVTNSSSYSHI). Positions 87-102 (SNSNLSVTNSSSYSHI) are enriched in low complexity.

It belongs to the beta-defensin family.

It localises to the secreted. Has antibacterial activity. The protein is Beta-defensin 116 (DEFB116) of Homo sapiens (Human).